The chain runs to 350 residues: ADP-ribose pyrophosphatase, mitochondrial (350 aa).

Residues 1–46 (MAGRSLGKAVATVSLSVALASVTVRSSGCRAIPAPRNPFPSCGFHL) constitute a mitochondrion transit peptide. 2 disordered regions span residues 53–77 (GSNGVKDNSHNKARTSPYPGSKVER) and 116–153 (SESSFSPRFNEKDGHVERKSQNGLYEIENGRPRNPAGR). Phosphoserine is present on S121. Positions 124 to 135 (FNEKDGHVERKS) are enriched in basic and acidic residues. The 157-residue stretch at 178-334 (WKRDESGNKI…SQFIKLVAEK (157 aa)) folds into the Nudix hydrolase domain. A Nudix box motif is present at residues 215-237 (GMVDPGEKISATLKREFGEEALN).

It belongs to the Nudix hydrolase family. NudF subfamily. As to quaternary structure, monomer. Interacts with GLOD4. Mg(2+) is required as a cofactor. The cofactor is Mn(2+).

Its subcellular location is the mitochondrion. It carries out the reaction ADP-D-ribose + H2O = D-ribose 5-phosphate + AMP + 2 H(+). In terms of biological role, hydrolyzes ADP-ribose (ADPR) to AMP and ribose 5'-phosphate. In Rattus norvegicus (Rat), this protein is ADP-ribose pyrophosphatase, mitochondrial (Nudt9).